Reading from the N-terminus, the 110-residue chain is Acylphosphatase (110 aa).

The Acylphosphatase-like domain maps to 20–108; sequence RAHIFVRGKV…GEFNDFSILP (89 aa). Catalysis depends on residues R35 and N53.

It belongs to the acylphosphatase family.

It catalyses the reaction an acyl phosphate + H2O = a carboxylate + phosphate + H(+). This Pyrobaculum calidifontis (strain DSM 21063 / JCM 11548 / VA1) protein is Acylphosphatase (acyP).